The chain runs to 153 residues: Endoribonuclease YbeY (153 aa).

Zn(2+) is bound by residues His-114, His-118, and His-124.

Belongs to the endoribonuclease YbeY family. Requires Zn(2+) as cofactor.

The protein localises to the cytoplasm. Functionally, single strand-specific metallo-endoribonuclease involved in late-stage 70S ribosome quality control and in maturation of the 3' terminus of the 16S rRNA. This chain is Endoribonuclease YbeY, found in Shewanella sp. (strain MR-7).